Here is a 61-residue protein sequence, read N- to C-terminus: MRLLYLLFAAVMLLFLQAVPANGSYYSTLQCRNNHGHCRRLCFHGEQWIGNCNGRHQHCCK.

The first 21 residues, 1–21 (MRLLYLLFAAVMLLFLQAVPA), serve as a signal peptide directing secretion. Residues S24, R40, H44, N51, N53, G54, H58, and K61 each contribute to the a 1,2-diacyl-sn-glycero-3-phosphate site. 3 disulfides stabilise this stretch: C31–C59, C38–C52, and C42–C60.

It belongs to the beta-defensin family. Monomeric. Forms multimeric, probably including tetrameric, complexes in the presence of phospholipid phosphatidic acid.

The protein resides in the secreted. Its function is as follows. Exhibits antimicrobial activity against fungi. Antimicrobial activity in a pH-dependent manner against the yeast C.albicans; activity is salt tolerant and retains antifungal activity in NaCl concentrations of 100mM. Permeabilizes C.albicans cell membranes via targeting plasma membrane phospholipid phosphatidic acid. The polypeptide is Beta-defensin 13 (Crocodylus porosus (Saltwater crocodile)).